The sequence spans 244 residues: Phosphoadenosine 5'-phosphosulfate reductase (244 aa).

The Nucleophile; cysteine thiosulfonate intermediate role is filled by C239.

The protein belongs to the PAPS reductase family. CysH subfamily.

Its subcellular location is the cytoplasm. It carries out the reaction [thioredoxin]-disulfide + sulfite + adenosine 3',5'-bisphosphate + 2 H(+) = [thioredoxin]-dithiol + 3'-phosphoadenylyl sulfate. Its pathway is sulfur metabolism; hydrogen sulfide biosynthesis; sulfite from sulfate: step 3/3. Catalyzes the formation of sulfite from phosphoadenosine 5'-phosphosulfate (PAPS) using thioredoxin as an electron donor. This Sodalis glossinidius (strain morsitans) protein is Phosphoadenosine 5'-phosphosulfate reductase.